The following is a 614-amino-acid chain: Glutamine--fructose-6-phosphate aminotransferase [isomerizing] (614 aa).

Residue cysteine 2 is the Nucleophile; for GATase activity of the active site. Positions 2–221 constitute a Glutamine amidotransferase type-2 domain; that stretch reads CGIVGYIGKR…DGEIAVINRG (220 aa). 2 SIS domains span residues 291–430 and 463–604; these read YKEK…EKGT and LSKT…VDQP. The For Fru-6P isomerization activity role is filled by lysine 609.

As to quaternary structure, homodimer.

It localises to the cytoplasm. It catalyses the reaction D-fructose 6-phosphate + L-glutamine = D-glucosamine 6-phosphate + L-glutamate. Its function is as follows. Catalyzes the first step in hexosamine metabolism, converting fructose-6P into glucosamine-6P using glutamine as a nitrogen source. This chain is Glutamine--fructose-6-phosphate aminotransferase [isomerizing], found in Bacteroides thetaiotaomicron (strain ATCC 29148 / DSM 2079 / JCM 5827 / CCUG 10774 / NCTC 10582 / VPI-5482 / E50).